Here is a 454-residue protein sequence, read N- to C-terminus: Cobyrinate a,c-diamide synthase (454 aa).

Residues 244 to 440 (RLGIAKDKAF…LHVHFYQNPK (197 aa)) form the GATase cobBQ-type domain. The Nucleophile role is filled by cysteine 326.

It belongs to the CobB/CbiA family. The cofactor is Mg(2+).

The enzyme catalyses cob(II)yrinate + 2 L-glutamine + 2 ATP + 2 H2O = cob(II)yrinate a,c diamide + 2 L-glutamate + 2 ADP + 2 phosphate + 2 H(+). It functions in the pathway cofactor biosynthesis; adenosylcobalamin biosynthesis; cob(II)yrinate a,c-diamide from sirohydrochlorin (anaerobic route): step 10/10. Functionally, catalyzes the ATP-dependent amidation of the two carboxylate groups at positions a and c of cobyrinate, using either L-glutamine or ammonia as the nitrogen source. The chain is Cobyrinate a,c-diamide synthase from Limosilactobacillus reuteri subsp. reuteri (strain JCM 1112) (Lactobacillus reuteri).